The chain runs to 314 residues: Pantothenate synthetase (314 aa).

Position 43–50 (43–50) interacts with ATP; sequence MGALHEGH. His50 (proton donor) is an active-site residue. Gln75 contributes to the (R)-pantoate binding site. Gln75 contacts beta-alanine. The interval 112-131 is disordered; the sequence is MYPDGTRTSVHPGPLGDDLE. 161–164 is a binding site for ATP; the sequence is GEKD. Gln167 serves as a coordination point for (R)-pantoate. Residues Val190 and 198–201 each bind ATP; that span reads LSSR.

Belongs to the pantothenate synthetase family. In terms of assembly, homodimer.

The protein localises to the cytoplasm. It carries out the reaction (R)-pantoate + beta-alanine + ATP = (R)-pantothenate + AMP + diphosphate + H(+). It participates in cofactor biosynthesis; (R)-pantothenate biosynthesis; (R)-pantothenate from (R)-pantoate and beta-alanine: step 1/1. Its function is as follows. Catalyzes the condensation of pantoate with beta-alanine in an ATP-dependent reaction via a pantoyl-adenylate intermediate. This Mycolicibacterium smegmatis (strain ATCC 700084 / mc(2)155) (Mycobacterium smegmatis) protein is Pantothenate synthetase.